Reading from the N-terminus, the 153-residue chain is Endoribonuclease YbeY (153 aa).

Zn(2+)-binding residues include histidine 112, histidine 116, and histidine 122.

Belongs to the endoribonuclease YbeY family. The cofactor is Zn(2+).

Its subcellular location is the cytoplasm. Its function is as follows. Single strand-specific metallo-endoribonuclease involved in late-stage 70S ribosome quality control and in maturation of the 3' terminus of the 16S rRNA. In Persephonella marina (strain DSM 14350 / EX-H1), this protein is Endoribonuclease YbeY.